Here is a 492-residue protein sequence, read N- to C-terminus: Probable cobyric acid synthase (492 aa).

In terms of domain architecture, GATase cobBQ-type spans 252 to 444; sequence PIEVNIVKFS…FHGILENFEF (193 aa). C330 (nucleophile) is an active-site residue. H436 is an active-site residue.

It belongs to the CobB/CobQ family. CobQ subfamily.

It functions in the pathway cofactor biosynthesis; adenosylcobalamin biosynthesis. Functionally, catalyzes amidations at positions B, D, E, and G on adenosylcobyrinic A,C-diamide. NH(2) groups are provided by glutamine, and one molecule of ATP is hydrogenolyzed for each amidation. The protein is Probable cobyric acid synthase of Methanococcus maripaludis (strain C6 / ATCC BAA-1332).